A 613-amino-acid chain; its full sequence is Zinc finger CCCH domain-containing protein 59 (613 aa).

Residues 275-296 (NTTLSPYISPAKSVPVEETPKR) are disordered. 2 C3H1-type zinc fingers span residues 318–346 (AGGN…HDEE) and 350–378 (HYNR…HSLS).

This is Zinc finger CCCH domain-containing protein 59 from Oryza sativa subsp. japonica (Rice).